The sequence spans 177 residues: Thioredoxin M-type, chloroplastic (177 aa).

A chloroplast-targeting transit peptide spans 1–64 (MAAFTCTSSP…SRLRRGGIIC (64 aa)). The Thioredoxin domain occupies 65-177 (EAQDTATGIP…LATSIDKFLQ (113 aa)). Active-site nucleophile residues include C101 and C104. A disulfide bridge connects residues C101 and C104.

Belongs to the thioredoxin family. Plant M-type subfamily. As to quaternary structure, forms a complex with heterodimeric ferredoxin-thioredoxin reductase (FTR) and ferredoxin.

It localises to the plastid. The protein resides in the chloroplast. Functionally, participates in various redox reactions through the reversible oxidation of the active center dithiol to a disulfide. The M form is known to activate NADP-malate dehydrogenase. The protein is Thioredoxin M-type, chloroplastic of Brassica napus (Rape).